A 214-amino-acid chain; its full sequence is Methyltransferase HEMK2 (214 aa).

7 residues coordinate S-adenosyl-L-methionine: Thr29, Glu51, Gly53, Asp77, Asp103, Leu104, and Asn122. Residue Asn122 participates in a protein binding.

Belongs to the eukaryotic/archaeal PrmC-related family. As to quaternary structure, heterodimer; heterodimerization with TRMT112 is required for S-adenosyl-L-methionine-binding. Ubiquitinated, leading to its degradation by the proteasome. In terms of tissue distribution, highly expressed in undifferentiated embryonic stem cells (at protein level). Also expressed in testis and brain, weakly expressed in differentiated embryonic stem cells and kidney. Not expressed in muscle, heart, placenta, pancreas, lung and stomach.

It localises to the nucleus. It catalyses the reaction L-lysyl-[histone] + S-adenosyl-L-methionine = N(6)-methyl-L-lysyl-[histone] + S-adenosyl-L-homocysteine + H(+). The enzyme catalyses L-glutaminyl-[protein] + S-adenosyl-L-methionine = N(5)-methyl-L-glutaminyl-[protein] + S-adenosyl-L-homocysteine + H(+). The catalysed reaction is methylarsonous acid + S-adenosyl-L-methionine = dimethylarsinate + S-adenosyl-L-homocysteine + 2 H(+). Functionally, methyltransferase that can methylate proteins and, to a lower extent, arsenic. Catalytic subunit of a heterodimer with TRMT112, which monomethylates 'Lys-12' of histone H4 (H4K12me1), a modification present at the promoters of numerous genes encoding cell cycle regulators. Catalytic subunit of a heterodimer with TRMT112, which catalyzes N5-methylation of Glu residue of proteins with a Gly-Gln-Xaa-Xaa-Xaa-Arg motif. Methylates ETF1 on 'Gln-185'; ETF1 needs to be complexed to ERF3 in its GTP-bound form to be efficiently methylated. May also play a role in the modulation of arsenic-induced toxicity by mediating the conversion of monomethylarsonous acid (3+) into the less toxic dimethylarsonic acid. It however only plays a limited role in arsenic metabolism compared with AS3MT. The polypeptide is Methyltransferase HEMK2 (Mus musculus (Mouse)).